A 398-amino-acid polypeptide reads, in one-letter code: Succinate--CoA ligase [ADP-forming] subunit beta (398 aa).

Residues 9 to 254 (KALLHEFGVP…ETEEDAKEIE (246 aa)) enclose the ATP-grasp domain. ATP is bound by residues Lys-46, 53 to 55 (GRG), Glu-109, Ser-112, and Glu-117. 2 residues coordinate Mg(2+): Asn-209 and Asp-223. Substrate contacts are provided by residues Asn-274 and 331–333 (GIM).

Belongs to the succinate/malate CoA ligase beta subunit family. As to quaternary structure, heterotetramer of two alpha and two beta subunits. It depends on Mg(2+) as a cofactor.

The enzyme catalyses succinate + ATP + CoA = succinyl-CoA + ADP + phosphate. The catalysed reaction is GTP + succinate + CoA = succinyl-CoA + GDP + phosphate. It participates in carbohydrate metabolism; tricarboxylic acid cycle; succinate from succinyl-CoA (ligase route): step 1/1. Its function is as follows. Succinyl-CoA synthetase functions in the citric acid cycle (TCA), coupling the hydrolysis of succinyl-CoA to the synthesis of either ATP or GTP and thus represents the only step of substrate-level phosphorylation in the TCA. The beta subunit provides nucleotide specificity of the enzyme and binds the substrate succinate, while the binding sites for coenzyme A and phosphate are found in the alpha subunit. The chain is Succinate--CoA ligase [ADP-forming] subunit beta from Bradyrhizobium sp. (strain BTAi1 / ATCC BAA-1182).